The following is a 171-amino-acid chain: 3-hydroxydecanoyl-[acyl-carrier-protein] dehydratase (171 aa).

Residue histidine 70 is part of the active site.

The protein belongs to the thioester dehydratase family. FabA subfamily. In terms of assembly, homodimer.

It localises to the cytoplasm. The catalysed reaction is a (3R)-hydroxyacyl-[ACP] = a (2E)-enoyl-[ACP] + H2O. It catalyses the reaction (3R)-hydroxydecanoyl-[ACP] = (2E)-decenoyl-[ACP] + H2O. It carries out the reaction (2E)-decenoyl-[ACP] = (3Z)-decenoyl-[ACP]. It participates in lipid metabolism; fatty acid biosynthesis. Functionally, necessary for the introduction of cis unsaturation into fatty acids. Catalyzes the dehydration of (3R)-3-hydroxydecanoyl-ACP to E-(2)-decenoyl-ACP and then its isomerization to Z-(3)-decenoyl-ACP. Can catalyze the dehydratase reaction for beta-hydroxyacyl-ACPs with saturated chain lengths up to 16:0, being most active on intermediate chain length. The protein is 3-hydroxydecanoyl-[acyl-carrier-protein] dehydratase of Hydrogenovibrio crunogenus (strain DSM 25203 / XCL-2) (Thiomicrospira crunogena).